Consider the following 462-residue polypeptide: BPI fold-containing family B member 2 (462 aa).

The first 22 residues, 1-22, serve as a signal peptide directing secretion; that stretch reads MARACSLGLLLLLLLLLRTVVT. Thr55 bears the Phosphothreonine mark. Ser63 is modified (phosphoserine). A glycan (N-linked (GlcNAc...) asparagine) is linked at Asn99. Cys140 and Cys177 are oxidised to a cystine. Asn297 and Asn336 each carry an N-linked (GlcNAc...) asparagine glycan.

The protein belongs to the BPI/LBP/Plunc superfamily. BPI/LBP family.

It localises to the secreted. The polypeptide is BPI fold-containing family B member 2 (Bpifb2) (Mus musculus (Mouse)).